A 163-amino-acid chain; its full sequence is Single-stranded DNA-binding protein 2 (163 aa).

In terms of domain architecture, SSB spans Met1–Glu104. A disordered region spans residues Arg109–Phe163. The segment covering Gly119–Ser130 has biased composition (low complexity). Polar residues predominate over residues Tyr131–Asn140. The Important for interaction with partner proteins motif lies at Asp158–Phe163.

As to quaternary structure, homotetramer.

Functionally, plays an important role in DNA replication, recombination and repair. Binds to ssDNA and to an array of partner proteins to recruit them to their sites of action during DNA metabolism. This Streptococcus pyogenes serotype M18 (strain MGAS8232) protein is Single-stranded DNA-binding protein 2 (ssb2).